The sequence spans 311 residues: Bifunctional protein FolD (311 aa).

174 to 176 serves as a coordination point for NADP(+); sequence GKG.

Belongs to the tetrahydrofolate dehydrogenase/cyclohydrolase family. In terms of assembly, homodimer.

The enzyme catalyses (6R)-5,10-methylene-5,6,7,8-tetrahydrofolate + NADP(+) = (6R)-5,10-methenyltetrahydrofolate + NADPH. It carries out the reaction (6R)-5,10-methenyltetrahydrofolate + H2O = (6R)-10-formyltetrahydrofolate + H(+). Its pathway is one-carbon metabolism; tetrahydrofolate interconversion. In terms of biological role, catalyzes the oxidation of 5,10-methylenetetrahydrofolate to 5,10-methenyltetrahydrofolate and then the hydrolysis of 5,10-methenyltetrahydrofolate to 10-formyltetrahydrofolate. This is Bifunctional protein FolD from Pyrobaculum islandicum (strain DSM 4184 / JCM 9189 / GEO3).